Reading from the N-terminus, the 281-residue chain is 3-mercaptopyruvate sulfurtransferase (281 aa).

Rhodanese domains lie at 17-135 (DDPE…LLEE) and 165-278 (HENT…LPVE). Arg179 is a binding site for substrate. Cys238 serves as the catalytic Cysteine persulfide intermediate. The tract at residues 238–244 (CGSGVTA) is substrate specificity.

It localises to the cytoplasm. It carries out the reaction 2-oxo-3-sulfanylpropanoate + [thioredoxin]-dithiol = [thioredoxin]-disulfide + hydrogen sulfide + pyruvate + H(+). Functionally, catalyzes the transfer of sulfur from 3-mercaptopyruvate to a thiol-containing acceptor to form an intramolecular disulfide releasing hydrogen sulfide and pyruvate. The chain is 3-mercaptopyruvate sulfurtransferase (sseA) from Escherichia coli O157:H7.